A 728-amino-acid polypeptide reads, in one-letter code: E3 ubiquitin-protein ligase LNX (728 aa).

Residues 45–83 form an RING-type zinc finger; sequence CHICLQALLDPLDTPCGHTYCTLCLTNFLVEKDFCPVDR. An NPXY motif motif is present at residues 185-188; sequence NPAY. A disordered region spans residues 185-220; sequence NPAYVSSVEDGEPVANSSDSGRSNRTRARPFERSTM. An interaction with MAGEB18 region spans residues 186–244; the sequence is PAYVSSVEDGEPVANSSDSGRSNRTRARPFERSTMRSRSFKKINRALSALRRTKSGSVV. PDZ domains lie at 278-362 and 385-467; these read SIKI…VLRE and HVIL…VSRQ. Position 445 is a phosphoserine (S445). The tract at residues 481-500 is disordered; sequence WISNGQQSPGPGERNTASKP. 2 PDZ domains span residues 508-593 and 638-723; these read VVSV…ALEV and DVIL…IASW.

As to quaternary structure, interacts with CXADR. Interacts with MAGEB18 and MAGEF1. Interacts with the phosphotyrosine interaction domain of all isoforms of NUMB. IGSF5/JAM4 interacts with isoform 2 through the second PDZ domain, other isoforms may also interact with IGSF5/JAM4. Isoform 1 and isoform 2 are expressed in the heart. Isoform 1 is also expressed in kidney, lung and skeletal muscle while isoform 2 is also expressed in brain.

The protein localises to the cytoplasm. It carries out the reaction S-ubiquitinyl-[E2 ubiquitin-conjugating enzyme]-L-cysteine + [acceptor protein]-L-lysine = [E2 ubiquitin-conjugating enzyme]-L-cysteine + N(6)-ubiquitinyl-[acceptor protein]-L-lysine.. Its pathway is protein modification; protein ubiquitination. E3 ubiquitin-protein ligase that mediates ubiquitination and subsequent proteasomal degradation of NUMB. E3 ubiquitin ligases accept ubiquitin from an E2 ubiquitin-conjugating enzyme in the form of a thioester and then directly transfers the ubiquitin to targeted substrates. Mediates ubiquitination of isoform p66 and isoform p72 of NUMB, but not that of isoform p71 or isoform p65. Its function is as follows. Isoform 2 provides an endocytic scaffold for IGSF5/JAM4. The protein is E3 ubiquitin-protein ligase LNX (Lnx1) of Mus musculus (Mouse).